We begin with the raw amino-acid sequence, 217 residues long: MSRALLRSVLELRTPVTRLPPSFLLPFRPAARFLHQTAQQVEPTSQSDAAAAAATLLKASPPKVTTATTPEAPAAVPTSTPFSQQPPISQQVKELLPVLAAQPGHYTTIHIHGKPYLVTEGDTVKLPFKMPGVAPGDVLRLNRASVIGSRDLTLQGAPYVDERLFECRAIVMGTESEPMRVMIKKKRRCRKKKHVFSKHKYTVLRINQLKINDVSSL.

The segment covering 61–81 (PPKVTTATTPEAPAAVPTSTP) has biased composition (low complexity). The tract at residues 61–87 (PPKVTTATTPEAPAAVPTSTPFSQQPP) is disordered.

This sequence belongs to the bacterial ribosomal protein bL21 family. In terms of assembly, component of the mitochondrial large ribosomal subunit (mt-LSU). Mature N.crassa 74S mitochondrial ribosomes consist of a small (37S) and a large (54S) subunit. The 37S small subunit contains a 16S ribosomal RNA (16S mt-rRNA) and 32 different proteins. The 54S large subunit contains a 23S rRNA (23S mt-rRNA) and 42 different proteins.

The protein resides in the mitochondrion. Functionally, component of the mitochondrial ribosome (mitoribosome), a dedicated translation machinery responsible for the synthesis of mitochondrial genome-encoded proteins, including at least some of the essential transmembrane subunits of the mitochondrial respiratory chain. The mitoribosomes are attached to the mitochondrial inner membrane and translation products are cotranslationally integrated into the membrane. This is Large ribosomal subunit protein bL21m (mrpl49) from Neurospora crassa (strain ATCC 24698 / 74-OR23-1A / CBS 708.71 / DSM 1257 / FGSC 987).